A 550-amino-acid polypeptide reads, in one-letter code: QDLPGNDDSTATLCLGHHAVTNGTIVKTITDDQIEVTNATELVQSSSTGKICNNPHRILDGRDCTLIDALLGDPHCDVFQDETWDLFVERSNAYSNCYPYDVPDYASLRSLVASSGTLEFITEGFTWTGVTQNGGSNACKRGPANGFFSRLNWLTKSGSTYPVLNVTMPNNDNFDKLYIWGIHHPSTSQEQTTLYVQASGRVIVSTRRSQQTIISNIGSRPWVRGQSGRISIYWTIVKSGDVLVINSNGNLIAPRGYFKMRTGKSSIMRSDAPIDTCISECITPNGSIPNDKPFQNVNKITYGACPKYVKQNTLKLATGMRNVPEKQTRGLFGAIAGFIENGWEGMIDVWYGFRHQNSEGTGQAADLKSTQAAIDQINGKLNRVIEKTNEKFHQIEKEFSEVEGRIQDLEKYVEDTKIDLWSYNADVLVALENQHTIDLTDSEMNKLFEKTRRQLRENAEDMGNGCFKIYHKCDNTCIESIRNGTYDHDVYRDEALNNRFQIKGVELKSGYKDWILWISFAISCFLLCVVLLGFIMWACQRGNIRCNICI.

The Extracellular segment spans residues 1 to 514 (QDLPGNDDST…VELKSGYKDW (514 aa)). 6 cysteine pairs are disulfide-bonded: Cys-14–Cys-466, Cys-52–Cys-277, Cys-64–Cys-76, Cys-97–Cys-139, Cys-281–Cys-305, and Cys-473–Cys-477. Residues Asn-22 and Asn-38 are each glycosylated (N-linked (GlcNAc...) asparagine; by host). N-linked (GlcNAc...) asparagine; by host glycans are attached at residues Asn-165 and Asn-285. The N-linked (GlcNAc...) asparagine; by host glycan is linked to Asn-483. Residues 515-535 (ILWISFAISCFLLCVVLLGFI) form a helical membrane-spanning segment. Over 536 to 550 (MWACQRGNIRCNICI) the chain is Cytoplasmic. Residues Cys-539, Cys-546, and Cys-549 are each lipidated (S-palmitoyl cysteine; by host).

The protein belongs to the influenza viruses hemagglutinin family. In terms of assembly, homotrimer of disulfide-linked HA1-HA2. Post-translationally, palmitoylated. In terms of processing, in natural infection, inactive HA is matured into HA1 and HA2 outside the cell by one or more trypsin-like, arginine-specific endoprotease secreted by the bronchial epithelial cells. One identified protease that may be involved in this process is secreted in lungs by club cells.

It localises to the virion membrane. Its subcellular location is the host apical cell membrane. Binds to sialic acid-containing receptors on the cell surface, bringing about the attachment of the virus particle to the cell. This attachment induces virion internalization either through clathrin-dependent endocytosis or through clathrin- and caveolin-independent pathway. Plays a major role in the determination of host range restriction and virulence. Class I viral fusion protein. Responsible for penetration of the virus into the cell cytoplasm by mediating the fusion of the membrane of the endocytosed virus particle with the endosomal membrane. Low pH in endosomes induces an irreversible conformational change in HA2, releasing the fusion hydrophobic peptide. Several trimers are required to form a competent fusion pore. The protein is Hemagglutinin of Aves.